Here is a 68-residue protein sequence, read N- to C-terminus: Small ribosomal subunit protein eS17 (68 aa).

This sequence belongs to the eukaryotic ribosomal protein eS17 family.

The protein is Small ribosomal subunit protein eS17 of Staphylothermus marinus (strain ATCC 43588 / DSM 3639 / JCM 9404 / F1).